We begin with the raw amino-acid sequence, 76 residues long: Esculentin-2CG1 (76 aa).

An N-terminal signal peptide occupies residues 1 to 22; it reads MFTMKKSMLLLFFLGTISLSLC. The propeptide at 23–37 is removed in mature form; the sequence is EEERSADEDDGEEEV. Cysteine 70 and cysteine 76 are disulfide-bonded.

In terms of tissue distribution, expressed by the skin glands.

The protein localises to the secreted. Antimicrobial peptide active against a variety of Gram-positive and some Gram-negative bacterial strains. Has antifungal activity against a slime mold isolate. Has hemolytic activity against human erythrocytes. The polypeptide is Esculentin-2CG1 (Amolops chunganensis (Chungan torrent frog)).